The following is a 340-amino-acid chain: MKEVIQDKLGRPIRDLRISVTDRCNFRCDYCMPKEIFGDDYTFLPKNELLTFEELTRISKIYAQLGVKKIRITGGEPLLRRNLYKLVEQLNLIDGIEDIGLTTNGLLLKKHGKNLYQAGLRRINVSLDAIEDNVFQEINNRNIKASTILEQIDYAVSIGFEVKVNVVIQKGVNDNQIIPMIDYFKNKNIEVRFIEFMDVGNDNGWNFNKVVTKEEMLNMIEQHFEISPVAPKYYGEVAKYFRHKDSDAQFGLITSVSESFCSTCTRARLSSDGKFYGCLFASSEGFDVKALIRNGATDDDLKAQFKRLWSIRNDQYSDKRTMQTIENNRKKKINMNYIGG.

Residues 8–229 (KLGRPIRDLR…IEQHFEISPV (222 aa)) enclose the Radical SAM core domain. GTP is bound at residue arginine 17. Residues cysteine 24 and cysteine 28 each contribute to the [4Fe-4S] cluster site. Residue tyrosine 30 coordinates S-adenosyl-L-methionine. Cysteine 31 contacts [4Fe-4S] cluster. Arginine 71 serves as a coordination point for GTP. Residue glycine 75 coordinates S-adenosyl-L-methionine. Residue threonine 102 coordinates GTP. Serine 126 is an S-adenosyl-L-methionine binding site. Lysine 163 provides a ligand contact to GTP. S-adenosyl-L-methionine is bound at residue methionine 197. [4Fe-4S] cluster contacts are provided by cysteine 261 and cysteine 264. 266–268 (RAR) contributes to the GTP binding site. Residue cysteine 278 coordinates [4Fe-4S] cluster.

The protein belongs to the radical SAM superfamily. MoaA family. In terms of assembly, monomer and homodimer. Requires [4Fe-4S] cluster as cofactor.

It carries out the reaction GTP + AH2 + S-adenosyl-L-methionine = (8S)-3',8-cyclo-7,8-dihydroguanosine 5'-triphosphate + 5'-deoxyadenosine + L-methionine + A + H(+). It participates in cofactor biosynthesis; molybdopterin biosynthesis. Its function is as follows. Catalyzes the cyclization of GTP to (8S)-3',8-cyclo-7,8-dihydroguanosine 5'-triphosphate. The protein is GTP 3',8-cyclase of Staphylococcus epidermidis (strain ATCC 35984 / DSM 28319 / BCRC 17069 / CCUG 31568 / BM 3577 / RP62A).